A 95-amino-acid polypeptide reads, in one-letter code: Integration host factor subunit beta (95 aa).

Residues 56–76 (RAPRTGRNPKTGSSVDLEGKY) are disordered.

The protein belongs to the bacterial histone-like protein family. Heterodimer of an alpha and a beta chain.

Its function is as follows. This protein is one of the two subunits of integration host factor, a specific DNA-binding protein that functions in genetic recombination as well as in transcriptional and translational control. This Shewanella baltica (strain OS223) protein is Integration host factor subunit beta.